The primary structure comprises 228 residues: RNA-free ribonuclease P (228 aa).

It belongs to the HARP family.

The catalysed reaction is Endonucleolytic cleavage of RNA, removing 5'-extranucleotides from tRNA precursor.. In terms of biological role, RNA-free RNase P that catalyzes the removal of the 5'-leader sequence from pre-tRNA to produce the mature 5'-terminus. This is RNA-free ribonuclease P from Methanopyrus kandleri (strain AV19 / DSM 6324 / JCM 9639 / NBRC 100938).